The primary structure comprises 253 residues: Zinc import ATP-binding protein ZnuC (253 aa).

One can recognise an ABC transporter domain in the interval 6–227; it reads VTLNKISVTF…FGNRGAEQLA (222 aa). 38–45 contributes to the ATP binding site; sequence GPNGAGKS.

Belongs to the ABC transporter superfamily. Zinc importer (TC 3.A.1.15.5) family. The complex is composed of two ATP-binding proteins (ZnuC), two transmembrane proteins (ZnuB) and a solute-binding protein (ZnuA).

The protein localises to the cell inner membrane. It carries out the reaction Zn(2+)(out) + ATP(in) + H2O(in) = Zn(2+)(in) + ADP(in) + phosphate(in) + H(+)(in). Functionally, part of the ABC transporter complex ZnuABC involved in zinc import. Responsible for energy coupling to the transport system. The chain is Zinc import ATP-binding protein ZnuC from Yersinia pestis bv. Antiqua (strain Antiqua).